We begin with the raw amino-acid sequence, 306 residues long: Ribonuclease Z (306 aa).

Residues His63, His65, Asp67, His68, His141, Asp211, and His269 each contribute to the Zn(2+) site. The active-site Proton acceptor is Asp67.

Belongs to the RNase Z family. Homodimer. Zn(2+) serves as cofactor.

The catalysed reaction is Endonucleolytic cleavage of RNA, removing extra 3' nucleotides from tRNA precursor, generating 3' termini of tRNAs. A 3'-hydroxy group is left at the tRNA terminus and a 5'-phosphoryl group is left at the trailer molecule.. Zinc phosphodiesterase, which displays some tRNA 3'-processing endonuclease activity. Probably involved in tRNA maturation, by removing a 3'-trailer from precursor tRNA. This Staphylococcus aureus (strain MSSA476) protein is Ribonuclease Z.